A 580-amino-acid chain; its full sequence is MRFKSIQQNIEDEGKVNVREVNPDSYAERDHGYTAGIFSDAEENFGITQQVADSTQNPTSKPKSRHAHFHETVHENPSEYSRSKCKQPTNEKEYDKAIEALVAKAIVEEHSGQQFPVYKGLEQYTLLQKMGDGAFSNVYKAIHNRTGEKVAIKVVQRAQPNTDPRDPRKRQGVESHNILKEVQIMRRVKHPNIIQLLEFIQTPEYYYLVLELADGGELFHQIVRLTYFSEDLSRHVITQVAHAIRYLHEDCGVVHRDIKPENLLFDSIDFVPSRVRKYRAGDDPDKVDEGEFIPGVGAGTIGRIRLADFGLSKVVWDSHTQTPCGTMGYTAPEIVRDERYSKGVDMWALGCVLYTILCGFPPFYDESISLLTKKVSRGEYSFLSPWWDDISKSAKDLISHLLTVDPESRYDIHQFLAHPWISGSREPTFPATDAPNTAQRENPFTYDFLEPEDVAAAGSAARTPGVNSLREVFNISYAAHRMEQEKIRKRGQRGNQGIMNFMGDMDDLMEENDDYDDGTKSVEHSMKRVNLSGENDPSLASRQPAQSQQQSSQRSRNKFKGFQLNLSKATLYNRRHRQKV.

The segment covering 51-61 has biased composition (polar residues); the sequence is VADSTQNPTSK. Residues 51–91 form a disordered region; that stretch reads VADSTQNPTSKPKSRHAHFHETVHENPSEYSRSKCKQPTNE. One can recognise a Protein kinase domain in the interval 124 to 421; the sequence is YTLLQKMGDG…IHQFLAHPWI (298 aa). ATP is bound by residues 130-138 and Lys-153; that span reads MGDGAFSNV. Asp-257 functions as the Proton acceptor in the catalytic mechanism. The tract at residues 530-580 is disordered; it reads NLSGENDPSLASRQPAQSQQQSSQRSRNKFKGFQLNLSKATLYNRRHRQKV. The segment covering 537-554 has biased composition (low complexity); sequence PSLASRQPAQSQQQSSQR.

It belongs to the protein kinase superfamily. CAMK Ser/Thr protein kinase family. CaMK subfamily. Mg(2+) serves as cofactor. In terms of processing, phosphorylated by sty1.

The protein resides in the cytoplasm. The protein localises to the nucleus. Its subcellular location is the nucleolus. It is found in the spore core. The enzyme catalyses L-seryl-[protein] + ATP = O-phospho-L-seryl-[protein] + ADP + H(+). It catalyses the reaction L-threonyl-[protein] + ATP = O-phospho-L-threonyl-[protein] + ADP + H(+). Functionally, delays the mitotic G2/M transition by promoting nuclear exclusion of cdc25. During osmotic stress, inhibits the G2/M transition in a sty1 stress-activated MAPK pathway-dependent manner. In Schizosaccharomyces pombe (strain 972 / ATCC 24843) (Fission yeast), this protein is Serine/threonine-protein kinase srk1.